A 184-amino-acid chain; its full sequence is Ras-related protein Rap-1b (184 aa).

10 to 17 provides a ligand contact to GTP; it reads GSGGVGKS. The Effector region signature appears at 32-40; it reads YDPTIEDSY. GTP contacts are provided by residues 57-61 and 116-119; these read DTAGT and NKCD. Cysteine methyl ester is present on Cys181. Residue Cys181 is the site of S-geranylgeranyl cysteine attachment. A propeptide spans 182-184 (removed in mature form); sequence HLL.

Belongs to the small GTPase superfamily. Ras family.

It is found in the cell membrane. It localises to the cytoplasm. The protein resides in the cytosol. The protein localises to the cell junction. It catalyses the reaction GTP + H2O = GDP + phosphate + H(+). In terms of biological role, probable GTP-binding protein that possesses GTPase activity. May play a role in endothelial cell polarity and endothelial barrier function. In Xenopus laevis (African clawed frog), this protein is Ras-related protein Rap-1b (rap1b).